The following is a 102-amino-acid chain: Large ribosomal subunit protein bL21 (102 aa).

This sequence belongs to the bacterial ribosomal protein bL21 family. As to quaternary structure, part of the 50S ribosomal subunit. Contacts protein L20.

Functionally, this protein binds to 23S rRNA in the presence of protein L20. This Solidesulfovibrio magneticus (strain ATCC 700980 / DSM 13731 / RS-1) (Desulfovibrio magneticus) protein is Large ribosomal subunit protein bL21.